Here is a 295-residue protein sequence, read N- to C-terminus: Zinc finger transcription factor pqm-1 (295 aa).

The disordered stretch occupies residues 1–23; sequence MSFLNNDFGSPPATSSPPTTMPK. Residues 10–22 are compositionally biased toward low complexity; that stretch reads SPPATSSPPTTMP. A C2H2-type 1; degenerate zinc finger spans residues 161-183; it reads YMCTVCRKVYGRYNSVSYHVTIY. The C2H2-type 2 zinc finger occupies 227-249; that stretch reads RKCPHCRHVSKSPAMLEKHIRRH.

The protein belongs to the krueppel C2H2-type zinc-finger protein family. Interacts with ceh-60.

Its subcellular location is the chromosome. The protein resides in the nucleus. It is found in the cytoplasm. Functionally, zinc finger transcription factor which acts as both a transcriptional activator and repressor. Binds to the promoters of genes that contain the 5'-CTTATCA-3' DNA consensus sequence in their regulatory region. Functions downstream of the Insulin/IGF-1-like signaling (IIS) mediated pathway. Involved in normal development, lifespan, stress response, lipid metabolism, innate immunity and exit from the developmentally arrested larval state known as dauer. Required for stress-induced expression of hsp-90 and resistance to heat stress, perhaps as part of a systemic stress signaling pathway. Involved in maintenance of proteostasis. Under hypoxic stress increases lipid levels by positively regulating fatty acid synthesis via fat-7 expression. Associates with homeobox protein ceh-60 at the promoters of some stress-responsive genes to regulate expression; may require phosphorylation for transcriptional repression activity. Acts downstream of nhr-14 to activate transcription of intestinal metal transporter smf-3, modulating innate immunity and iron uptake. May act downstream of the mTORC2 signaling mediated pathway. May act in a mutually exclusive manner with the FOXO transcription factor daf-16. The polypeptide is Zinc finger transcription factor pqm-1 (Caenorhabditis elegans).